A 354-amino-acid polypeptide reads, in one-letter code: Methylthioribose-1-phosphate isomerase (354 aa).

Substrate contacts are provided by residues 58–60 (RGA), arginine 101, and glutamine 204. Aspartate 245 functions as the Proton donor in the catalytic mechanism. 255–256 (NK) is a substrate binding site.

This sequence belongs to the eIF-2B alpha/beta/delta subunits family. MtnA subfamily.

It catalyses the reaction 5-(methylsulfanyl)-alpha-D-ribose 1-phosphate = 5-(methylsulfanyl)-D-ribulose 1-phosphate. Its pathway is amino-acid biosynthesis; L-methionine biosynthesis via salvage pathway; L-methionine from S-methyl-5-thio-alpha-D-ribose 1-phosphate: step 1/6. In terms of biological role, catalyzes the interconversion of methylthioribose-1-phosphate (MTR-1-P) into methylthioribulose-1-phosphate (MTRu-1-P). This is Methylthioribose-1-phosphate isomerase from Xylella fastidiosa (strain 9a5c).